We begin with the raw amino-acid sequence, 404 residues long: MSFPVAFLLVLFLVPFTFATNNLVVRQKELEIVIGGEVSVNFQIKNHTSQSLNATRISLSQSPYISHPDAILVDNWNANVTVLGSQLVSGAILEALNCTTDGSITCPLDLEDAFARITVIRSHFLAILIQIVGWTYFFAWSISFYPQMYLNFKRKSVVGLNFDFLSLNLVGFCAYAIFNLLMYYNSHVKNEYNIVNPRSPPPVLLNDVVFAVHAFLACFITILQCLFYERDNQSVSSKCIALMIVLISFGFCSAAATVLRKIQLLSFVTSLSYIKMAVTCCKYFPQAYFNYTRKSTVGWSIGNIMLDFTGGTLDILQMILQAVNVNDWSAFYANPVKFGLGFVSIFFDIIFMVQHYVLYPNAEVPHNEYHGVDNPNPDNIARDAEQYAGDSESMESTEPIIVHD.

Residues 20 to 123 lie on the Lumenal side of the membrane; that stretch reads TNNLVVRQKE…FARITVIRSH (104 aa). Residues N46, N53, N79, and N97 are each glycosylated (N-linked (GlcNAc...) asparagine). The helical transmembrane segment at 124–144 threads the bilayer; the sequence is FLAILIQIVGWTYFFAWSISF. The region spanning 125–191 is the PQ-loop 1 domain; sequence LAILIQIVGW…MYYNSHVKNE (67 aa). The Cytoplasmic portion of the chain corresponds to 145–163; it reads YPQMYLNFKRKSVVGLNFD. A helical transmembrane segment spans residues 164-184; that stretch reads FLSLNLVGFCAYAIFNLLMYY. The Lumenal portion of the chain corresponds to 185 to 207; the sequence is NSHVKNEYNIVNPRSPPPVLLND. Residues 208–228 form a helical membrane-spanning segment; sequence VVFAVHAFLACFITILQCLFY. Residues 229 to 238 are Cytoplasmic-facing; sequence ERDNQSVSSK. A helical transmembrane segment spans residues 239 to 259; the sequence is CIALMIVLISFGFCSAAATVL. The Lumenal segment spans residues 260 to 263; it reads RKIQ. Residues 264 to 285 traverse the membrane as a helical segment; that stretch reads LLSFVTSLSYIKMAVTCCKYFP. One can recognise a PQ-loop 2 domain in the interval 266–327; that stretch reads SFVTSLSYIK…MILQAVNVND (62 aa). Residues 286–295 lie on the Cytoplasmic side of the membrane; sequence QAYFNYTRKS. A helical membrane pass occupies residues 296–316; the sequence is TVGWSIGNIMLDFTGGTLDIL. Residues 317–337 are Lumenal-facing; the sequence is QMILQAVNVNDWSAFYANPVK. Residues 338 to 358 form a helical membrane-spanning segment; the sequence is FGLGFVSIFFDIIFMVQHYVL. The Cytoplasmic portion of the chain corresponds to 359 to 404; it reads YPNAEVPHNEYHGVDNPNPDNIARDAEQYAGDSESMESTEPIIVHD.

This sequence belongs to the cystinosin family.

The protein localises to the lysosome membrane. It localises to the cytoplasmic vesicle. The protein resides in the phagosome. It carries out the reaction L-cystine(out) + H(+)(out) = L-cystine(in) + H(+)(in). Its function is as follows. Cystine/H(+) symporter that mediates export of cystine, the oxidized dimer of cysteine, from lysosomes. May play a role in the degradation of engulfed apoptotic cells. This chain is Cystinosin homolog (ctns-1), found in Caenorhabditis elegans.